The following is a 183-amino-acid chain: MSTEKEKMIAGELYRSADETLSRDRLRARQLIHRYNHSLAEEHTLRQQILADLFGQVTEAYIEPTFRCDYGYNIFLGNNFFANFDCVMLDVCPIRIGDNCMLAPGVHIYTATHPIDPVARNSGAELGKPVTIGNNVWIGGRAVINPGVTIGDNVVVASGAVVTKDVPDNVVVGGNPARIIKKL.

Asn-83 contacts acetyl-CoA. His-113 (proton donor/acceptor) is an active-site residue. Residues Gly-140, Ser-158, 163-164, Arg-178, and Lys-181 each bind acetyl-CoA; that span reads TK.

This sequence belongs to the transferase hexapeptide repeat family. As to quaternary structure, homodimer.

The enzyme catalyses D-maltose + acetyl-CoA = 1-O-acetylmaltose + CoA. Functionally, catalyzes the CoA-dependent transfer of an acetyl group to maltose and other sugars. Acetylates glucose exclusively at the C6 position and maltose at the C6 position of the non-reducing end glucosyl moiety. Is able to acetylate maltooligosaccharides. The protein is Maltose O-acetyltransferase (maa) of Escherichia coli (strain K12).